Here is a 124-residue protein sequence, read N- to C-terminus: S-adenosylmethionine decarboxylase proenzyme (124 aa).

Residue Ser70 is the Schiff-base intermediate with substrate; via pyruvic acid of the active site. Pyruvic acid (Ser); by autocatalysis is present on Ser70. His75 (proton acceptor; for processing activity) is an active-site residue. Cys90 functions as the Proton donor; for catalytic activity in the catalytic mechanism.

Belongs to the prokaryotic AdoMetDC family. Type 1 subfamily. Heterotetramer of two alpha and two beta chains arranged as a dimer of alpha/beta heterodimers. The cofactor is pyruvate. Post-translationally, is synthesized initially as an inactive proenzyme. Formation of the active enzyme involves a self-maturation process in which the active site pyruvoyl group is generated from an internal serine residue via an autocatalytic post-translational modification. Two non-identical subunits are generated from the proenzyme in this reaction, and the pyruvate is formed at the N-terminus of the alpha chain, which is derived from the carboxyl end of the proenzyme. The post-translation cleavage follows an unusual pathway, termed non-hydrolytic serinolysis, in which the side chain hydroxyl group of the serine supplies its oxygen atom to form the C-terminus of the beta chain, while the remainder of the serine residue undergoes an oxidative deamination to produce ammonia and the pyruvoyl group blocking the N-terminus of the alpha chain.

It carries out the reaction S-adenosyl-L-methionine + H(+) = S-adenosyl 3-(methylsulfanyl)propylamine + CO2. The protein operates within amine and polyamine biosynthesis; S-adenosylmethioninamine biosynthesis; S-adenosylmethioninamine from S-adenosyl-L-methionine: step 1/1. Its function is as follows. Catalyzes the decarboxylation of S-adenosylmethionine to S-adenosylmethioninamine (dcAdoMet), the propylamine donor required for the synthesis of the polyamines spermine and spermidine from the diamine putrescine. The protein is S-adenosylmethionine decarboxylase proenzyme of Pyrobaculum neutrophilum (strain DSM 2338 / JCM 9278 / NBRC 100436 / V24Sta) (Thermoproteus neutrophilus).